The chain runs to 181 residues: MKLNVTIEIPKKSNVKYEYDRKTNQISVDRILFGTEVYPHNYGFIKEALDWDGDELDALVIADQSFLPGIIVPAKIIGAMEMIDDGETDTKLISVIDCDPRYKHINNLSDLGEHTLKEIQNFFETYKLLQNKKVVIKGFKDSAWATKEYNECVELMKKYGKMDKDEFVNKMKKEHPEKYKA.

Residues Lys16, Arg30, and Tyr42 each contribute to the substrate site. Positions 52, 57, and 89 each coordinate Mg(2+). Tyr126 contacts substrate.

It belongs to the PPase family. Homohexamer. Mg(2+) is required as a cofactor.

It localises to the cytoplasm. The enzyme catalyses diphosphate + H2O = 2 phosphate + H(+). In terms of biological role, catalyzes the hydrolysis of inorganic pyrophosphate (PPi) forming two phosphate ions. The sequence is that of Inorganic pyrophosphatase from Malacoplasma penetrans (strain HF-2) (Mycoplasma penetrans).